The following is a 506-amino-acid chain: Kynureninase 1 (506 aa).

Residues Leu141, Thr142, 169-172 (FPSD), Asp254, His257, and Tyr279 contribute to the pyridoxal 5'-phosphate site. Position 280 is an N6-(pyridoxal phosphate)lysine (Lys280). A compositionally biased stretch (low complexity) spans 303-319 (ETAPTTTPDGTNGNPKT). Residues 303–322 (ETAPTTTPDGTNGNPKTISD) form a disordered region. Positions 334 and 362 each coordinate pyridoxal 5'-phosphate.

It belongs to the kynureninase family. In terms of assembly, homodimer. Pyridoxal 5'-phosphate serves as cofactor.

The protein resides in the cytoplasm. The enzyme catalyses L-kynurenine + H2O = anthranilate + L-alanine + H(+). The catalysed reaction is 3-hydroxy-L-kynurenine + H2O = 3-hydroxyanthranilate + L-alanine + H(+). It functions in the pathway amino-acid degradation; L-kynurenine degradation; L-alanine and anthranilate from L-kynurenine: step 1/1. Its pathway is cofactor biosynthesis; NAD(+) biosynthesis; quinolinate from L-kynurenine: step 2/3. In terms of biological role, catalyzes the cleavage of L-kynurenine (L-Kyn) and L-3-hydroxykynurenine (L-3OHKyn) into anthranilic acid (AA) and 3-hydroxyanthranilic acid (3-OHAA), respectively. The chain is Kynureninase 1 from Phaeosphaeria nodorum (strain SN15 / ATCC MYA-4574 / FGSC 10173) (Glume blotch fungus).